Reading from the N-terminus, the 316-residue chain is UPF0725 protein At1g02770 (316 aa).

This sequence belongs to the UPF0725 (EMB2204) family.

This chain is UPF0725 protein At1g02770, found in Arabidopsis thaliana (Mouse-ear cress).